Here is a 120-residue protein sequence, read N- to C-terminus: UPF0091 protein PH1455 (120 aa).

Belongs to the UPF0091 family.

In Pyrococcus horikoshii (strain ATCC 700860 / DSM 12428 / JCM 9974 / NBRC 100139 / OT-3), this protein is UPF0091 protein PH1455.